A 478-amino-acid chain; its full sequence is MAPNAADKCPVMNNTGEKCPVMSSSTQSRGPRDIYTLEALSHFNREKIPERAVHAKGTGAYGEFEVTADISDICNIDMLLGVGKKTQCVTRFSTTGLERGSSDGVRDLKGMAVKFFTEQGDWDWVSLNFPFFFIRDPAKFPDMIHSQRRDPQTNLLNPNMTWDFVTKNPEALHMTLLQHSDFGTMFTWRTLSSYVGHAFKWVMPDGSFKYVHFFLASDRGPNFTDGSTAKVDPNDPDFATKDLFEAIERGDYPSWTANVQVVDPKDAPKLGFNILDLTKHWNLGTYPKGLDTIPSRPFGKLTLNRNVKDYFSEVEKLAFSPSNLVPGVEPSEDPILQARMFAYPDAQRYRLGIDHLKAPLRRKETACQHDLGPEFEKWLSQVTSEAWSHPHEDDYKFAREYYEVLPEFRSQEFQDRMVENLCKSIAPGPEELRKRVYDTFELVSSELARRLREGAEAIVAEKARPDSPSRAQPGQLRL.

Residue His54 is part of the active site. Residue Tyr343 coordinates heme. The disordered stretch occupies residues 459 to 478 (VAEKARPDSPSRAQPGQLRL).

Belongs to the catalase family. Heme is required as a cofactor.

Its pathway is alkaloid biosynthesis; ergot alkaloid biosynthesis. Catalase; part of the gene cluster that mediates the biosynthesis of fungal ergot alkaloid. DmaW catalyzes the first step of ergot alkaloid biosynthesis by condensing dimethylallyl diphosphate (DMAP) and tryptophan to form 4-dimethylallyl-L-tryptophan. The second step is catalyzed by the methyltransferase easF that methylates 4-dimethylallyl-L-tryptophan in the presence of S-adenosyl-L-methionine, resulting in the formation of 4-dimethylallyl-L-abrine. The catalase easC and the FAD-dependent oxidoreductase easE then transform 4-dimethylallyl-L-abrine to chanoclavine-I which is further oxidized by easD in the presence of NAD(+), resulting in the formation of chanoclavine-I aldehyde. Chanoclavine-I aldehyde is the precursor of ergoamides and ergopeptines in Clavicipitaceae, and clavine-type alcaloids such as fumiclavine in Trichocomaceae. However, the metabolites downstream of chanoclavine-I aldehyde in Arthrodermataceae have not been identified yet. This Arthroderma benhamiae (strain ATCC MYA-4681 / CBS 112371) (Trichophyton mentagrophytes) protein is Catalase easC.